The primary structure comprises 174 residues: Co-chaperone protein HscB homolog (174 aa).

The 73-residue stretch at 2–74 (NYFELFNLPV…IRRAEHMLAL (73 aa)) folds into the J domain.

This sequence belongs to the HscB family. In terms of assembly, interacts with HscA and stimulates its ATPase activity.

Its function is as follows. Co-chaperone involved in the maturation of iron-sulfur cluster-containing proteins. Seems to help targeting proteins to be folded toward HscA. In Shewanella amazonensis (strain ATCC BAA-1098 / SB2B), this protein is Co-chaperone protein HscB homolog.